The primary structure comprises 166 residues: MKTPRIPIAIQQAVMRSLREHLAKANLKLERRYAEPTLVYQQRGTSAGTAWLEKNEIRLNPVLLLENQQEFIDEVVPHELAHLLVWQHFGRVAPHGKEWKWMMENVLGVPARRTHRFELDSVRQNTFPYRCRCQQHQLTVRRHNRVVRGEATYRCVHCGDLLVAEK.

The SprT-like domain maps to 19–164 (REHLAKANLK…CVHCGDLLVA (146 aa)). Residue His-78 participates in Zn(2+) binding. The active site involves Glu-79. His-82 contributes to the Zn(2+) binding site.

Belongs to the SprT family. Zn(2+) is required as a cofactor.

The protein localises to the cytoplasm. This Klebsiella pneumoniae (strain 342) protein is Protein SprT.